A 304-amino-acid polypeptide reads, in one-letter code: tRNA uridine(34) hydroxylase (304 aa).

The Rhodanese domain occupies 124-219 (QDEETLLIDT…YLETIPKEDS (96 aa)). C179 functions as the Cysteine persulfide intermediate in the catalytic mechanism.

This sequence belongs to the TrhO family.

It carries out the reaction uridine(34) in tRNA + AH2 + O2 = 5-hydroxyuridine(34) in tRNA + A + H2O. Its function is as follows. Catalyzes oxygen-dependent 5-hydroxyuridine (ho5U) modification at position 34 in tRNAs. This chain is tRNA uridine(34) hydroxylase, found in Bartonella henselae (strain ATCC 49882 / DSM 28221 / CCUG 30454 / Houston 1) (Rochalimaea henselae).